The sequence spans 284 residues: MNTVIMILVVMTIIGLIFGLVLAYVNKRFAMEVNPLVDLVEDVLPKGQCGGCGFAGCKAYAEAVVLDESVPPNLCVPGKAAVAEQVAKLTGKSAPPIEPRVAHVRCGGDCTKAVKNFEYEGIHDCVAANLLEGGPKACKYGCLGFGTCVKSCPFGAMAMGSNGLPIIDTDICTGCGTCVSACPKQVLGFRPVGSKVMVNCNSKNKGGAVRKACSVGCLGCGLCAKNCPNDAIKVENNLAVVDQSICASCSEATCLAKCPTGAIKAIVSGTDLQQQSKNEAAANS.

Residues Met1–Asn26 form a hydrophobic region. The 4Fe-4S domain maps to Glu32–Lys92. [4Fe-4S] cluster-binding residues include Cys49, Cys52, Cys57, Cys75, Cys138, Cys142, Cys148, Cys152, Cys172, Cys175, Cys178, Cys182, Cys217, Cys220, Cys223, Cys227, Cys246, Cys249, Cys254, and Cys258. 4Fe-4S ferredoxin-type domains lie at Gly133–Asn162, Gly163–Val192, Gly206–Asn237, and Ala239–Gly269.

Belongs to the 4Fe4S bacterial-type ferredoxin family. RnfB subfamily. As to quaternary structure, the complex is composed of six subunits: RnfA, RnfB, RnfC, RnfD, RnfE and RnfG. Requires [4Fe-4S] cluster as cofactor.

Its subcellular location is the cell membrane. In terms of biological role, part of a membrane-bound complex that couples electron transfer with translocation of ions across the membrane. Couples electron transfer from reduced ferredoxin to NAD(+) with translocation of H(+) out of the cell. Essential for energy conservation during autotrophic growth. Contributes to ATP synthesis during heterotrophic growth. The protein is Proton-translocating ferredoxin:NAD(+) oxidoreductase complex subunit B of Clostridium ljungdahlii (strain ATCC 55383 / DSM 13528 / PETC).